The sequence spans 161 residues: Globin CTT-IX (161 aa).

The N-terminal stretch at 1–16 (MKFFIVLALCIVGAIA) is a signal peptide. The 144-residue stretch at 18 to 161 (PVSSDQANAI…NIFGMIFAHL (144 aa)) folds into the Globin domain. Residues H76 and H111 each coordinate heme b.

The protein belongs to the globin family. In terms of assembly, homodimer.

In Chironomus thummi thummi (Midge), this protein is Globin CTT-IX (CTT-9).